A 715-amino-acid polypeptide reads, in one-letter code: Tegument protein UL46 (715 aa).

3 disordered regions span residues 432–513 (WSAG…CAAQ), 585–605 (DDAR…APYE), and 659–680 (GSAL…PSPV). Positions 444–455 (GPGGHRAGGGTV) are enriched in gly residues. Composition is skewed to low complexity over residues 456–467 (GKRFSGPARQRA) and 475–488 (PTLD…VPEA). The segment covering 664–677 (SPPPRPPPPPPLSP) has biased composition (pro residues).

The protein belongs to the herpesviridae HHV-1 VP11/12 protein family. As to quaternary structure, interacts with VP16. Interacts with host LCK, PIK3R1, SHC1 AND GRB2; these interactions promote the activation of the PI3K/AKT pathway. Interacts with host YWHAB. Interacts with ICP0; this interaction targets UL46 for degradation by the proteasome. Post-translationally, phosphorylated by host LCK. The phosphorylation seems to be lymphocyte-specific.

The protein resides in the virion tegument. It is found in the host cell membrane. In terms of biological role, plays a role in the activation of the host PI3K/AKT pathway to promote cell survival. Interacts with and activates host LCK and thereby recruits downstream partners SHC1, GRB2 and PI3KR1 in order to activate the PI3K pathway by phosphorylating host AKT on its activating residues. This mechanism is inhibited by the viral protein US3 that instead promotes incorporation of UL46 into virions. The polypeptide is Tegument protein UL46 (Human herpesvirus 1 (strain F) (HHV-1)).